Reading from the N-terminus, the 218-residue chain is Ribose-5-phosphate isomerase A (218 aa).

Substrate-binding positions include 28 to 31, 81 to 84, and 94 to 97; these read TGST, DGAD, and KGGG. Glutamate 103 (proton acceptor) is an active-site residue. Lysine 121 provides a ligand contact to substrate.

The protein belongs to the ribose 5-phosphate isomerase family. Homodimer.

The enzyme catalyses aldehydo-D-ribose 5-phosphate = D-ribulose 5-phosphate. Its pathway is carbohydrate degradation; pentose phosphate pathway; D-ribose 5-phosphate from D-ribulose 5-phosphate (non-oxidative stage): step 1/1. Its function is as follows. Catalyzes the reversible conversion of ribose-5-phosphate to ribulose 5-phosphate. In Proteus mirabilis (strain HI4320), this protein is Ribose-5-phosphate isomerase A.